We begin with the raw amino-acid sequence, 375 residues long: Probable pectin lyase B (375 aa).

Residues 1 to 19 (MKYAAFLPTIGALVSQAIA) form the signal peptide. 2 disulfides stabilise this stretch: cysteine 82/cysteine 101 and cysteine 91/cysteine 225. N-linked (GlcNAc...) asparagine glycosylation is present at asparagine 128. Residue arginine 255 is part of the active site. The cysteines at positions 321 and 329 are disulfide-linked.

Belongs to the polysaccharide lyase 1 family.

The protein localises to the secreted. The enzyme catalyses Eliminative cleavage of (1-&gt;4)-alpha-D-galacturonan methyl ester to give oligosaccharides with 4-deoxy-6-O-methyl-alpha-D-galact-4-enuronosyl groups at their non-reducing ends.. In terms of biological role, pectinolytic enzymes consist of four classes of enzymes: pectin lyase, polygalacturonase, pectin methylesterase and rhamnogalacturonase. Among pectinolytic enzymes, pectin lyase is the most important in depolymerization of pectin, since it cleaves internal glycosidic bonds of highly methylated pectins. This Aspergillus fumigatus (strain CBS 144.89 / FGSC A1163 / CEA10) (Neosartorya fumigata) protein is Probable pectin lyase B (pelB).